Reading from the N-terminus, the 139-residue chain is Immunogenic miracidial antigen 8I' (139 aa).

The tract at residues 61-139 (IDVGDEDYHD…PKKYGSGYKH (79 aa)) is disordered. Residues 64–85 (GDEDYHDGDDDVDYTDDVDDVD) are compositionally biased toward acidic residues. The segment covering 90–103 (SPSQLLQGGYQRNQ) has biased composition (polar residues).

It belongs to the immunogenic miracidial antigen family.

The polypeptide is Immunogenic miracidial antigen 8I' (8I') (Schistosoma japonicum (Blood fluke)).